The following is a 442-amino-acid chain: uncharacterized protein (442 aa).

Residues cysteine 43, cysteine 49, cysteine 52, and cysteine 130 each contribute to the [4Fe-4S] cluster site. S-adenosyl-L-methionine is bound by residues glutamine 273, tyrosine 302, glutamate 323, and aspartate 372. The Nucleophile role is filled by cysteine 399.

It belongs to the class I-like SAM-binding methyltransferase superfamily. RNA M5U methyltransferase family.

This is an uncharacterized protein from Protochlamydia amoebophila (strain UWE25).